The chain runs to 231 residues: Ribonuclease 3 (231 aa).

Positions 5-134 (QKGIKEDFGI…FIGALYKDQG (130 aa)) constitute an RNase III domain. Mg(2+) is bound at residue E47. The active site involves D51. Residues D120 and E123 each contribute to the Mg(2+) site. E123 is a catalytic residue. In terms of domain architecture, DRBM spans 160 to 230 (DYKSKLQELL…AKKAYQDVTP (71 aa)).

This sequence belongs to the ribonuclease III family. As to quaternary structure, homodimer. The cofactor is Mg(2+).

It is found in the cytoplasm. It catalyses the reaction Endonucleolytic cleavage to 5'-phosphomonoester.. Digests double-stranded RNA. Involved in the processing of primary rRNA transcript to yield the immediate precursors to the large and small rRNAs (23S and 16S). Processes some mRNAs, and tRNAs when they are encoded in the rRNA operon. Processes pre-crRNA and tracrRNA of type II CRISPR loci if present in the organism. This Oenococcus oeni (strain ATCC BAA-331 / PSU-1) protein is Ribonuclease 3.